Here is a 216-residue protein sequence, read N- to C-terminus: Ras-related protein YPTC6 (216 aa).

Gly19 to Ser26 contributes to the GTP binding site. Residues Ser41–Phe49 carry the Effector region motif. GTP contacts are provided by residues Asp67–Gln71 and Asn125–Asp128. 2 S-geranylgeranyl cysteine lipidation sites follow: Cys214 and Cys215.

Belongs to the small GTPase superfamily. Rab family.

It localises to the cell membrane. This is Ras-related protein YPTC6 (YPTC6) from Chlamydomonas reinhardtii (Chlamydomonas smithii).